Reading from the N-terminus, the 315-residue chain is Mycothiol acetyltransferase (315 aa).

2 consecutive N-acetyltransferase domains span residues 8-145 (VETS…LPLD) and 163-315 (VSLR…DATA). Residue glutamate 39 participates in 1D-myo-inositol 2-(L-cysteinylamino)-2-deoxy-alpha-D-glucopyranoside binding. Acetyl-CoA is bound by residues 81–83 (LVV) and 89–94 (HHGVGT). The 1D-myo-inositol 2-(L-cysteinylamino)-2-deoxy-alpha-D-glucopyranoside site is built by glutamate 190, lysine 229, and glutamate 243. Acetyl-CoA is bound at residue 247-249 (LGV). Tyrosine 281 is a 1D-myo-inositol 2-(L-cysteinylamino)-2-deoxy-alpha-D-glucopyranoside binding site. Residue 286 to 291 (NTVAIR) coordinates acetyl-CoA.

It belongs to the acetyltransferase family. MshD subfamily. In terms of assembly, monomer.

The enzyme catalyses 1D-myo-inositol 2-(L-cysteinylamino)-2-deoxy-alpha-D-glucopyranoside + acetyl-CoA = mycothiol + CoA + H(+). Catalyzes the transfer of acetyl from acetyl-CoA to desacetylmycothiol (Cys-GlcN-Ins) to form mycothiol. In Sanguibacter keddieii (strain ATCC 51767 / DSM 10542 / NCFB 3025 / ST-74), this protein is Mycothiol acetyltransferase.